We begin with the raw amino-acid sequence, 576 residues long: Arginine--tRNA ligase (576 aa).

A 'HIGH' region motif is present at residues 126–136 (ANPTGPMHIGH).

Belongs to the class-I aminoacyl-tRNA synthetase family. As to quaternary structure, monomer.

The protein localises to the cytoplasm. The enzyme catalyses tRNA(Arg) + L-arginine + ATP = L-arginyl-tRNA(Arg) + AMP + diphosphate. The sequence is that of Arginine--tRNA ligase from Rickettsia bellii (strain OSU 85-389).